The chain runs to 276 residues: Bis(5'-nucleosyl)-tetraphosphatase, symmetrical (276 aa).

The protein belongs to the Ap4A hydrolase family.

The enzyme catalyses P(1),P(4)-bis(5'-adenosyl) tetraphosphate + H2O = 2 ADP + 2 H(+). Its function is as follows. Hydrolyzes diadenosine 5',5'''-P1,P4-tetraphosphate to yield ADP. The protein is Bis(5'-nucleosyl)-tetraphosphatase, symmetrical of Psychromonas ingrahamii (strain DSM 17664 / CCUG 51855 / 37).